We begin with the raw amino-acid sequence, 762 residues long: MAVVAAAAATGSTTRSGGGGGEGTRSGRKKPPPPPLQERVPLGRRAAWAWRLAGLAVLLLLLALLALRLLRHHGGAGGDGGVWRVALVCEAWFAALCALNVSAKWSPVRFVTRPENLVAEGRTPSTTAAEYGELPAVDMLVTTADPALEPPLVTVNTVLSLLALDYPRAGERLACYVSDDGCSPLTCHALREAAGFAAAWVPFCRRYGVAVRAPFRYFSSSSSPESGGPADRKFLDDWTFMKDEYDKLVRRIKNTDERSLLRHGGGEFFAEFLNVERRNHPTIVKTRVSAVMTNAPIMLNMDCDMFVNNPQAVLHAMCLLLGFDDEASSGFVQAPQRFYDALKDDPFGNQMECFFKRFISGVQGVQGAFYAGTGCFHRRKAVYGVPPNFNGAEREDTIGSSSYKELHTRFGNSEELNESARNIIWDLSSKPMVDISSRIEVAKAVSACNYDIGTCWGQEVGWVYGSLTEDILTGQRIHAMGWRSVLMVTEPPAFMGSAPIGGPACLTQFKRWATGQSEIIISRNNPILATMFKRLKFRQCLAYLIVLGWPLRAPFELCYGLLGPYCILTNQSFLPKASEDGFSVPLALFISYNTYNFMEYMACGLSARAWWNNHRMQRIISVSAWTLAFLTVLLKSLGLSETVFEVTGKDKSMSDDDDNTDGADPGRFTFDSLPVFIPVTALAMLNIVAVTVGACRVAFGTAEGVPCAPGIGEFMCCGWLVLCFFPFVRGIVWGKGSYGIPWSVKLKASLLVAMFVTFCKRN.

The segment covering Met1–Arg15 has biased composition (low complexity). A disordered region spans residues Met1–Arg39. 2 consecutive transmembrane segments (helical) span residues Ala47–Leu67 and Gly81–Val101. Catalysis depends on residues Asp180 and Asp470. Helical transmembrane passes span Leu541–Leu561, Phe582–Ala602, Ile619–Leu639, Leu673–Gly693, Ala708–Val728, and Gly739–Cys759.

The protein belongs to the glycosyltransferase 2 family. Plant cellulose synthase-like H subfamily.

The protein resides in the golgi apparatus membrane. In terms of biological role, thought to be a Golgi-localized beta-glycan synthase that polymerize the backbones of noncellulosic polysaccharides (hemicelluloses) of plant cell wall. In Oryza sativa subsp. japonica (Rice), this protein is Cellulose synthase-like protein H2 (CSLH2).